Here is a 966-residue protein sequence, read N- to C-terminus: RNA polymerase-associated protein RapA (966 aa).

One can recognise a Helicase ATP-binding domain in the interval 163-337; that stretch reads EVGRRIAPRV…FARLHLLDPN (175 aa). Residue 176–183 coordinates ATP; sequence DEVGLGKT. The DEAH box signature appears at 283–286; the sequence is DEAH. In terms of domain architecture, Helicase C-terminal spans 489–643; it reads RVDWLINLVK…TCPMGAILHE (155 aa).

This sequence belongs to the SNF2/RAD54 helicase family. RapA subfamily. In terms of assembly, interacts with the RNAP. Has a higher affinity for the core RNAP than for the holoenzyme. Its ATPase activity is stimulated by binding to RNAP.

Its function is as follows. Transcription regulator that activates transcription by stimulating RNA polymerase (RNAP) recycling in case of stress conditions such as supercoiled DNA or high salt concentrations. Probably acts by releasing the RNAP, when it is trapped or immobilized on tightly supercoiled DNA. Does not activate transcription on linear DNA. Probably not involved in DNA repair. The protein is RNA polymerase-associated protein RapA of Histophilus somni (strain 129Pt) (Haemophilus somnus).